A 311-amino-acid chain; its full sequence is Catechol 1,2-dioxygenase (311 aa).

Catechol is bound at residue Y164. Fe cation-binding residues include Y164, Y200, H224, and H226. 224–226 (HIH) lines the catechol pocket.

It belongs to the intradiol ring-cleavage dioxygenase family. Homodimer. The cofactor is Fe(3+).

The enzyme catalyses catechol + O2 = cis,cis-muconate + 2 H(+). The protein operates within aromatic compound metabolism; beta-ketoadipate pathway; 5-oxo-4,5-dihydro-2-furylacetate from catechol: step 1/3. The chain is Catechol 1,2-dioxygenase from Acinetobacter baylyi (strain ATCC 33305 / BD413 / ADP1).